Consider the following 157-residue polypeptide: Pyruvoyl-dependent arginine decarboxylase 2 (157 aa).

S43 bears the Pyruvic acid (Ser) mark.

The protein belongs to the PdaD family. Pyruvate is required as a cofactor.

The enzyme catalyses L-arginine + H(+) = agmatine + CO2. In Archaeoglobus fulgidus (strain ATCC 49558 / DSM 4304 / JCM 9628 / NBRC 100126 / VC-16), this protein is Pyruvoyl-dependent arginine decarboxylase 2 (pdaD2).